Consider the following 713-residue polypeptide: Calpastatin (713 aa).

Low complexity predominate over residues Met-1 to Ser-21. Residues Met-1 to Gly-152 are disordered. Polar residues predominate over residues Val-47–Gly-64. Ser-57 is subject to Phosphoserine. Lys-69 is covalently cross-linked (Glycyl lysine isopeptide (Lys-Gly) (interchain with G-Cter in SUMO2)). N6-acetyllysine is present on Lys-86. The segment covering Ser-120–Glu-129 has biased composition (polar residues). Ser-122 and Ser-171 each carry phosphoserine. At Thr-173 the chain carries Phosphothreonine. Residues Thr-208–Ser-260 form an Inhibitory domain 1 repeat. The disordered stretch occupies residues Ile-253 to Glu-402. 2 positions are modified to phosphoserine: Ser-260 and Ser-281. Composition is skewed to polar residues over residues Ser-275–Lys-285, Gly-294–Val-304, and Gln-326–Leu-346. Residues Asp-341–Pro-393 form an Inhibitory domain 2 repeat. Composition is skewed to basic and acidic residues over residues Gln-351–Cys-365 and Tyr-376–Lys-387. Phosphoserine is present on residues Ser-401, Ser-403, Ser-410, and Ser-445. The tract at residues Leu-442–Gln-507 is disordered. The span at Thr-448–Glu-505 shows a compositional bias: basic and acidic residues. The Inhibitory domain 3 repeat unit spans residues Glu-451–Ala-504. A phosphoserine mark is found at Ser-521 and Ser-532. Residues Val-544 to Thr-558 are compositionally biased toward polar residues. Positions Val-544–Thr-713 are disordered. Residues Ser-580 and Ser-582 each carry the phosphoserine modification. The Inhibitory domain 4 repeat unit spans residues Pro-588–Lys-641. 2 stretches are compositionally biased toward basic and acidic residues: residues Pro-588 to Gln-648 and Ser-687 to Thr-713.

This sequence belongs to the protease inhibitor I27 (calpastatin) family.

Functionally, specific inhibition of calpain (calcium-dependent cysteine protease). Plays a key role in postmortem tenderization of meat and have been proposed to be involved in muscle protein degradation in living tissue. The chain is Calpastatin (Cast) from Rattus norvegicus (Rat).